A 705-amino-acid polypeptide reads, in one-letter code: Protein arginine N-methyltransferase 7 (705 aa).

SAM-dependent MTase PRMT-type domains follow at residues Gln-29 to Trp-372 and Thr-381 to Leu-705.

It belongs to the class I-like SAM-binding methyltransferase superfamily. Protein arginine N-methyltransferase family. PRMT7 subfamily.

Its function is as follows. Essential arginine methyltransferase that can both catalyze the formation of omega-N monomethylarginine (MMA) and symmetrical dimethylarginine (sDMA). Specifically mediates the symmetrical dimethylation of arginine residues in the small nuclear ribonucleoproteins SmD1 and SmD3. In Drosophila simulans (Fruit fly), this protein is Protein arginine N-methyltransferase 7 (Art7).